Here is a 396-residue protein sequence, read N- to C-terminus: MAKGKFERTKPHVNVGTIGHVDHGKTTLTAAIATVLSKKFGGEAKGYDQIDNAPEEKARGITINTSHVEYETESRHYAHVDCPGHADYVKNMITGAAQMDGAILVCSAADGPMPQTREHILLSRQVGVPYIIVFLNKADMVDDAELLELVEMEVRELLSKYEFPGDDLPIVKGSAKLALEGDTGPLGEQAILALANALDTYIPTPERAVDGAFLLPVEDVFSISGRGTVVTGRIERGIIKVGEEIEIVGIRDTQKTTCTGVEMFRKLLDQGQAGDNVGVLLRGTKREDVERGQVLAKPGSIKPHKHFTGEIYVLSKDEGGRHTPFFNNYRPQFYFRTTDVTGSIELPKDKEMVMPGDNVSITVMLINPIAMEEGLRFAIREGGRTVGAGVVAKIIE.

The region spanning 10-206 (KPHVNVGTIG…ALDTYIPTPE (197 aa)) is the tr-type G domain. The G1 stretch occupies residues 19–26 (GHVDHGKT). GTP is bound at residue 19–26 (GHVDHGKT). Thr-26 is a binding site for Mg(2+). The interval 60–64 (GITIN) is G2. Positions 81–84 (DCPG) are G3. Residues 81–85 (DCPGH) and 136–139 (NKAD) each bind GTP. Residues 136 to 139 (NKAD) form a G4 region. A G5 region spans residues 174 to 176 (SAK).

The protein belongs to the TRAFAC class translation factor GTPase superfamily. Classic translation factor GTPase family. EF-Tu/EF-1A subfamily. Monomer.

The protein resides in the cytoplasm. The catalysed reaction is GTP + H2O = GDP + phosphate + H(+). GTP hydrolase that promotes the GTP-dependent binding of aminoacyl-tRNA to the A-site of ribosomes during protein biosynthesis. The protein is Elongation factor Tu of Janthinobacterium sp. (strain Marseille) (Minibacterium massiliensis).